The sequence spans 436 residues: UPF0597 protein YhaM (436 aa).

This sequence belongs to the UPF0597 family.

This chain is UPF0597 protein YhaM, found in Salmonella paratyphi C (strain RKS4594).